The following is a 215-amino-acid chain: MTDSSPQSNPNAVPGAADVPAAAQGQQQEQRRGGGGGGRGDRRGDRRGGRRGQDRDSEWQERVVQIRRVSKTVKGGKKMSFRAIVVVGNEKGQVGVGVGKAGDVIGAVRKGVADGKKHLVKVPLTRHSSIPTLSNGRDGAASVLIRPAAPGTGVIAGGSIRTVLELAGIKNVLAKRLGSKTPLNNARAAMVALSSLRTHKETAKERGISLEQIYS.

Residues 1–11 show a composition bias toward polar residues; that stretch reads MTDSSPQSNPN. A disordered region spans residues 1 to 61; that stretch reads MTDSSPQSNP…GQDRDSEWQE (61 aa). Over residues 12–28 the composition is skewed to low complexity; the sequence is AVPGAADVPAAAQGQQQ. Over residues 39–61 the composition is skewed to basic and acidic residues; it reads RGDRRGDRRGGRRGQDRDSEWQE. The S5 DRBM domain occupies 59–122; sequence WQERVVQIRR…ADGKKHLVKV (64 aa).

Belongs to the universal ribosomal protein uS5 family. In terms of assembly, part of the 30S ribosomal subunit. Contacts proteins S4 and S8.

Its function is as follows. With S4 and S12 plays an important role in translational accuracy. Functionally, located at the back of the 30S subunit body where it stabilizes the conformation of the head with respect to the body. This Synechococcus sp. (strain CC9902) protein is Small ribosomal subunit protein uS5.